We begin with the raw amino-acid sequence, 304 residues long: MAPGSVSSVSSSSFPSRDTSPSGSCGLPGADKPGPSCRRIQAGQRNPTMLHMVLEALKAREARQGTSVVAIKVYIQHKYPTVDTTRFKYLLKQALETGVRRGLLTRPAHSKAKGATGSFKLVPKPKTKKACAPKAGRGAAGAKETGSKKSGLLKKDQVGKATMEKGQKRRAYPCKAATLEMAPKKAKAKPKEVRKAPLKQDKAAGAPLTANGGQKVKRSGSRQEANAHGKTKGEKSKPLASKVQNSVASLAKRKMADMAHTVTVVQGAETVQETKVPTPSQDIGHKVQPIPRVRKAKTPENTQA.

Low complexity predominate over residues 1-24; sequence MAPGSVSSVSSSSFPSRDTSPSGS. Disordered regions lie at residues 1 to 38, 110 to 248, and 270 to 304; these read MAPGSVSSVSSSSFPSRDTSPSGSCGLPGADKPGPSCR, SKAK…NSVA, and TVQETKVPTPSQDIGHKVQPIPRVRKAKTPENTQA. The 79-residue stretch at 45–123 folds into the H15 domain; it reads RNPTMLHMVL…GATGSFKLVP (79 aa). Low complexity predominate over residues 132–144; it reads APKAGRGAAGAKE. 3 stretches are compositionally biased toward basic and acidic residues: residues 153–166, 189–202, and 225–237; these read LKKDQVGKATMEKG, KPKEVRKAPLKQDK, and ANAHGKTKGEKSK. The Nuclear localization signal motif lies at 154–170; the sequence is KKDQVGKATMEKGQKRR. Positions 270–281 are enriched in polar residues; the sequence is TVQETKVPTPSQ.

Belongs to the histone H1/H5 family. Oocyte-specific.

It is found in the cytoplasm. Its subcellular location is the nucleus. The protein localises to the chromosome. In terms of biological role, may play a key role in the control of gene expression during oogenesis and early embryogenesis, presumably through the perturbation of chromatin structure. Essential for meiotic maturation of germinal vesicle-stage oocytes. The somatic type linker histone H1c is rapidly replaced by H1oo in a donor nucleus transplanted into an oocyte. The greater mobility of H1oo as compared to H1c may contribute to this rapid replacement and increased instability of the embryonic chromatin structure. The rapid replacement of H1c with H1oo may play an important role in nuclear remodeling. The sequence is that of Histone H1.8 from Mus musculus (Mouse).